The chain runs to 282 residues: uncharacterized protein (282 aa).

Transmembrane regions (helical) follow at residues 9-29 (LLKI…APHG), 43-63 (ISGR…FLYA), 123-143 (VFVS…LYLV), 158-178 (YIGM…DNIL), and 232-252 (LAAG…ILLM).

This sequence belongs to the steroid 5-alpha reductase family.

It is found in the endoplasmic reticulum membrane. This is an uncharacterized protein from Schizosaccharomyces pombe (strain 972 / ATCC 24843) (Fission yeast).